The chain runs to 280 residues: Large ribosomal subunit protein uL2 (280 aa).

Disordered stretches follow at residues 1 to 20 (MAIR…SVSM), 29 to 58 (PEKS…GGGH), and 225 to 280 (VMNP…NKKR). Over residues 45–58 (SHGHITTRHRGGGH) the composition is skewed to basic residues. Positions 253 to 269 (KEGRTRRPKRYSDDMIV) are enriched in basic and acidic residues. A compositionally biased stretch (basic residues) spans 270–280 (RRRRANKNKKR).

This sequence belongs to the universal ribosomal protein uL2 family. Part of the 50S ribosomal subunit. Forms a bridge to the 30S subunit in the 70S ribosome.

One of the primary rRNA binding proteins. Required for association of the 30S and 50S subunits to form the 70S ribosome, for tRNA binding and peptide bond formation. It has been suggested to have peptidyltransferase activity; this is somewhat controversial. Makes several contacts with the 16S rRNA in the 70S ribosome. In Corynebacterium efficiens (strain DSM 44549 / YS-314 / AJ 12310 / JCM 11189 / NBRC 100395), this protein is Large ribosomal subunit protein uL2.